Consider the following 346-residue polypeptide: MNLGVIFGAKSFEHEISIVSAIVLKNVLKQGLKFIFCDANRDFYLIEQKDMRANFFSSGKYKNSKKLSLAKGGFYTHSLFGANKVECDVIINLIHGMDGEDGKIAALFEFYGVKYIGPRLEASALSYNKELTKFLAQKAGVKALDYEMLTRQSEPKFHYPIILKPARLGSSIGVSVVHDDSELAYAKDVAFEFDKDVLVEPFIKGVKEYNLAGCRIDGKIKFSIVEEPKKKEFLDYEQKYLSFSNENKVKEAEISEELKQKLKFNFSKIYDCGFDGAIIRCDFFVIDDEVYLNEINPNPGSLANYLFEDFESTLNALANSLPKEREIKIDYKFINSITSVKGSGKL.

The ATP-grasp domain occupies 133–326 (KFLAQKAGVK…LANSLPKERE (194 aa)). 159-209 (YPIILKPARLGSSIGVSVVHDDSELAYAKDVAFEFDKDVLVEPFIKGVKEY) serves as a coordination point for ATP. The Mg(2+) site is built by D282, E294, and N296.

Belongs to the D-alanine--D-alanine ligase family. Requires Mg(2+) as cofactor. It depends on Mn(2+) as a cofactor.

It localises to the cytoplasm. It catalyses the reaction 2 D-alanine + ATP = D-alanyl-D-alanine + ADP + phosphate + H(+). It functions in the pathway cell wall biogenesis; peptidoglycan biosynthesis. In terms of biological role, cell wall formation. In Campylobacter concisus (strain 13826), this protein is D-alanine--D-alanine ligase.